The following is a 130-amino-acid chain: MIIGIGTDILQIERLQAAYDRTNGRLAEKVLGPDEMLVFKHRLARNHKRGIAFLATRFAAKEAFSKAIGLGMHMPMTWRSLQTLNEPSGKPITSYLGALAQFMAEKNWEAHITVSDEQDMAIAHVIVTQK.

Residues D8 and E62 each coordinate Mg(2+).

The protein belongs to the P-Pant transferase superfamily. AcpS family. It depends on Mg(2+) as a cofactor.

It is found in the cytoplasm. The catalysed reaction is apo-[ACP] + CoA = holo-[ACP] + adenosine 3',5'-bisphosphate + H(+). Transfers the 4'-phosphopantetheine moiety from coenzyme A to a Ser of acyl-carrier-protein. The protein is Holo-[acyl-carrier-protein] synthase of Polynucleobacter asymbioticus (strain DSM 18221 / CIP 109841 / QLW-P1DMWA-1) (Polynucleobacter necessarius subsp. asymbioticus).